Consider the following 283-residue polypeptide: Secretory carrier-associated membrane protein 2 (283 aa).

The segment at 1-47 is disordered; that stretch reads MARHDPNPFADEEINPFANHTSVPPASNSYLKPLPPEPYDRGATVDI. Over 1–123 the chain is Cytoplasmic; that stretch reads MARHDPNPFA…LQKIQYVAFT (123 aa). Residues 18 to 30 show a composition bias toward polar residues; it reads ANHTSVPPASNSY. Residues 50 to 87 are a coiled coil; the sequence is DSGNDLRAKEMELQAKENELKRKEQELKRREDAIARTG. 4 consecutive transmembrane segments (helical) span residues 124–144, 151–171, 186–206, and 234–254; these read TLLGLVGCLLWNIVAVTVAWI, IWLLSIIYFLAGVPGAYVLWY, FGAFFFFYVFHIAFCGFAAVA, and IMYFIGAGFFCIETLLNIWVI. Topologically, residues 255–283 are cytoplasmic; that stretch reads QQVYAYFRGSGKAAEMKREATKSTLMRAL.

It belongs to the SCAMP family.

The protein localises to the cell membrane. The protein resides in the cytoplasmic vesicle. It localises to the secretory vesicle membrane. Functionally, probably involved in membrane trafficking. The polypeptide is Secretory carrier-associated membrane protein 2 (SCAMP2) (Arabidopsis thaliana (Mouse-ear cress)).